The following is a 129-amino-acid chain: Histone H2A-IV (129 aa).

It belongs to the histone H2A family. As to quaternary structure, the nucleosome is a histone octamer containing two molecules each of H2A, H2B, H3 and H4 assembled in one H3-H4 heterotetramer and two H2A-H2B heterodimers. The octamer wraps approximately 147 bp of DNA.

The protein localises to the nucleus. Its subcellular location is the chromosome. Core component of nucleosome. Nucleosomes wrap and compact DNA into chromatin, limiting DNA accessibility to the cellular machineries which require DNA as a template. Histones thereby play a central role in transcription regulation, DNA repair, DNA replication and chromosomal stability. DNA accessibility is regulated via a complex set of post-translational modifications of histones, also called histone code, and nucleosome remodeling. The chain is Histone H2A-IV from Volvox carteri (Green alga).